We begin with the raw amino-acid sequence, 192 residues long: Segregation and condensation protein B (192 aa).

This sequence belongs to the ScpB family. Homodimer. Homodimerization may be required to stabilize the binding of ScpA to the Smc head domains. Component of a cohesin-like complex composed of ScpA, ScpB and the Smc homodimer, in which ScpA and ScpB bind to the head domain of Smc. The presence of the three proteins is required for the association of the complex with DNA.

It is found in the cytoplasm. Functionally, participates in chromosomal partition during cell division. May act via the formation of a condensin-like complex containing Smc and ScpA that pull DNA away from mid-cell into both cell halves. This chain is Segregation and condensation protein B, found in Mycoplasma mobile (strain ATCC 43663 / 163K / NCTC 11711) (Mesomycoplasma mobile).